We begin with the raw amino-acid sequence, 153 residues long: Endoribonuclease YbeY (153 aa).

Zn(2+) is bound by residues His113, His117, and His123.

Belongs to the endoribonuclease YbeY family. Zn(2+) serves as cofactor.

It localises to the cytoplasm. Functionally, single strand-specific metallo-endoribonuclease involved in late-stage 70S ribosome quality control and in maturation of the 3' terminus of the 16S rRNA. This Aliivibrio fischeri (strain ATCC 700601 / ES114) (Vibrio fischeri) protein is Endoribonuclease YbeY.